The chain runs to 243 residues: Small ribosomal subunit protein uS3 (243 aa).

At Ala-2 the chain carries N-acetylalanine. A phosphoserine mark is found at Ser-6 and Ser-35. In terms of domain architecture, KH type-2 spans 21–92 (LNEFLTRELA…SVELYAEKVA (72 aa)). Position 42 is a phosphothreonine (Thr-42). Lys-62 is modified (N6-acetyllysine). Asymmetric dimethylarginine occurs at positions 64, 65, and 67. Thr-70 carries the post-translational modification Phosphothreonine. Residue Lys-90 forms a Glycyl lysine isopeptide (Lys-Gly) (interchain with G-Cter in ubiquitin) linkage. Ser-104 carries the phosphoserine modification. The residue at position 132 (Lys-132) is an N6-succinyllysine. Residues 200–243 (PKKPLPDHVSIVEPKDEILPTTPISEQKGGKPEPPAMPQPVPTA) form a disordered region. Lys-202 is covalently cross-linked (Glycyl lysine isopeptide (Lys-Gly) (interchain with G-Cter in ubiquitin)). A Phosphoserine modification is found at Ser-209. Residue Lys-214 forms a Glycyl lysine isopeptide (Lys-Gly) (interchain with G-Cter in SUMO2); alternate linkage. Lys-214 is covalently cross-linked (Glycyl lysine isopeptide (Lys-Gly) (interchain with G-Cter in ubiquitin); alternate). Residues Thr-220 and Thr-221 each carry the phosphothreonine modification. At Ser-224 the chain carries Phosphoserine. Lys-230 is covalently cross-linked (Glycyl lysine isopeptide (Lys-Gly) (interchain with G-Cter in SUMO2)). Pro residues predominate over residues 231-243 (PEPPAMPQPVPTA). A Phosphothreonine modification is found at Thr-242.

It belongs to the universal ribosomal protein uS3 family. As to quaternary structure, component of the 40S small ribosomal subunit. Identified in a IGF2BP1-dependent mRNP granule complex containing untranslated mRNAs. Interacts with HNRPD. Interacts with PRMT1; the interaction methylates RPS3. Interacts with SUMO1; the interaction sumoylates RPS3. Interacts with UBC9. Interacts with CDK1; the interaction phosphorylates RPS3. Interacts with PRKCD; the interaction phosphorylates RPS3. Interacts with PKB/AKT; the interaction phosphorylates RPS3. Interacts with E2F1; the interaction occurs in the absence of nerve growth factor and increases transcription of pro-apoptotic proteins BCL2L11/BIM and HRK/Dp5. Interacts with the base excision repair proteins APEX1 and OGG1; interaction with OGG1 increases OGG1 N-glycosylase activity. Interacts with UNG; the interaction increases the uracil excision activity of UNG1. Interacts with HSP90; the interaction prevents the ubiquitination and proteasome-dependent degradation of RPS3 and is suppressed by increased ROS levels. Interacts with TOM70; the interaction promotes translocation of RPS3 to the mitochondrion. Interacts (via N-terminus) with RELA (via N-terminus); the interaction enhances the DNA-binding activity of the NF-kappa-B p65-p50 complex. Interacts with NFKBIA; the interaction is direct and may bridge the interaction between RPS3 and RELA. Interacts with IKKB; the interaction phosphorylates RPS3 and enhances its translocation to the nucleus. Interacts (via KH domain) with MDM2 and TP53. Interacts with TRADD. Interacts with ASCC3. Identified in a HCV IRES-mediated translation complex, at least composed of EIF3C, IGF2BP1, RPS3 and HCV RNA-replicon. Interacts with CRY1. In terms of processing, methylation by PRMT1 is required for import into the nucleolus and for ribosome assembly. Sumoylation by SUMO1 enhances protein stability through increased resistance to proteolysis. Sumoylation occurs at one or more of the three consensus sites, Lys-18, Lys-214 and Lys-230. Post-translationally, phosphorylation at Thr-221 by CDK1 occurs mainly in G2/M phase. Phosphorylation by PRKCD occurs on a non-ribosomal-associated form which results in translocation of RPS3 to the nucleus and enhances its endonuclease activity. Phosphorylated on Ser-209 by IKKB in response to activation of the NF-kappa-B p65-p50 complex which enhances the association of RPS3 with importin-alpha and mediates the nuclear translocation of RPS3. Phosphorylation by MAPK is required for translocation to the nucleus following exposure of cells to DNA damaging agents such as hydrogen peroxide. Phosphorylation by PKB/AKT mediates RPS3 nuclear translocation, enhances RPS3 endonuclease activity and suppresses RPS3-induced neuronal apoptosis. In terms of processing, ubiquitinated; ubiquitination is prevented by interaction with HSP90 which stabilizes the protein. Monoubiquitinated at Lys-214 by RNF10 and ZNF598 when a ribosome has stalled during translation of poly(A) sequences, leading to preclude synthesis of a long poly-lysine tail and initiate the ribosome quality control (RQC) pathway to degrade the potentially detrimental aberrant nascent polypeptide. Deubiquitinated at Lys-214 by USP10, preventing degradation by the proteasome and promoting 40S ribosome subunit recycling following ribosome dissociation. Ufmylated by UFL1.

Its subcellular location is the cytoplasm. It is found in the nucleus. The protein resides in the nucleolus. The protein localises to the mitochondrion inner membrane. It localises to the cytoskeleton. Its subcellular location is the spindle. It carries out the reaction 2'-deoxyribonucleotide-(2'-deoxyribose 5'-phosphate)-2'-deoxyribonucleotide-DNA = a 3'-end 2'-deoxyribonucleotide-(2,3-dehydro-2,3-deoxyribose 5'-phosphate)-DNA + a 5'-end 5'-phospho-2'-deoxyribonucleoside-DNA + H(+). Endonuclease activity is inhibited by MgCl2 on apurinic/apyrimidinic DNA but not on UV-irradiated DNA. Functionally, component of the small ribosomal subunit. The ribosome is a large ribonucleoprotein complex responsible for the synthesis of proteins in the cell. Has endonuclease activity and plays a role in repair of damaged DNA. Cleaves phosphodiester bonds of DNAs containing altered bases with broad specificity and cleaves supercoiled DNA more efficiently than relaxed DNA. Displays high binding affinity for 7,8-dihydro-8-oxoguanine (8-oxoG), a common DNA lesion caused by reactive oxygen species (ROS). Has also been shown to bind with similar affinity to intact and damaged DNA. Stimulates the N-glycosylase activity of the base excision protein OGG1. Enhances the uracil excision activity of UNG1. Also stimulates the cleavage of the phosphodiester backbone by APEX1. When located in the mitochondrion, reduces cellular ROS levels and mitochondrial DNA damage. Has also been shown to negatively regulate DNA repair in cells exposed to hydrogen peroxide. Plays a role in regulating transcription as part of the NF-kappa-B p65-p50 complex where it binds to the RELA/p65 subunit, enhances binding of the complex to DNA and promotes transcription of target genes. Represses its own translation by binding to its cognate mRNA. Binds to and protects TP53/p53 from MDM2-mediated ubiquitination. Involved in spindle formation and chromosome movement during mitosis by regulating microtubule polymerization. Involved in induction of apoptosis through its role in activation of CASP8. Induces neuronal apoptosis by interacting with the E2F1 transcription factor and acting synergistically with it to up-regulate pro-apoptotic proteins BCL2L11/BIM and HRK/Dp5. Interacts with TRADD following exposure to UV radiation and induces apoptosis by caspase-dependent JNK activation. This chain is Small ribosomal subunit protein uS3 (RPS3), found in Oryctolagus cuniculus (Rabbit).